The sequence spans 232 residues: Homeobox protein Rhox13 (232 aa).

A disordered region spans residues 45–114; that stretch reads QAAVASSHDS…EAAAPSVAAV (70 aa). Residues 68 to 105 show a composition bias toward acidic residues; the sequence is SDSESESDSESESDSSDSSDESDDDSSTSDEDTSDPEE. The homeobox DNA-binding region spans 148-207; sequence RRGPPFHFAQWQVEEMESLFEETQYPDLLTRGELARTLNVPEVKVKVWFTNRRAKQRKIE.

The protein belongs to the paired-like homeobox family.

It localises to the nucleus. Probable transcription factor. In Mus musculus (Mouse), this protein is Homeobox protein Rhox13.